Reading from the N-terminus, the 100-residue chain is Large ribosomal subunit protein uL23 (100 aa).

The protein belongs to the universal ribosomal protein uL23 family. As to quaternary structure, part of the 50S ribosomal subunit. Contacts protein L29, and trigger factor when it is bound to the ribosome.

Its function is as follows. One of the early assembly proteins it binds 23S rRNA. One of the proteins that surrounds the polypeptide exit tunnel on the outside of the ribosome. Forms the main docking site for trigger factor binding to the ribosome. This chain is Large ribosomal subunit protein uL23, found in Prochlorococcus marinus (strain MIT 9301).